The chain runs to 186 residues: Peptidyl-tRNA hydrolase (186 aa).

Tyr14 contributes to the tRNA binding site. The active-site Proton acceptor is the His19. TRNA contacts are provided by Tyr64, Asn66, and Asn112.

Belongs to the PTH family. Monomer.

Its subcellular location is the cytoplasm. It catalyses the reaction an N-acyl-L-alpha-aminoacyl-tRNA + H2O = an N-acyl-L-amino acid + a tRNA + H(+). Functionally, hydrolyzes ribosome-free peptidyl-tRNAs (with 1 or more amino acids incorporated), which drop off the ribosome during protein synthesis, or as a result of ribosome stalling. Its function is as follows. Catalyzes the release of premature peptidyl moieties from peptidyl-tRNA molecules trapped in stalled 50S ribosomal subunits, and thus maintains levels of free tRNAs and 50S ribosomes. The protein is Peptidyl-tRNA hydrolase of Bacillus cereus (strain ATCC 14579 / DSM 31 / CCUG 7414 / JCM 2152 / NBRC 15305 / NCIMB 9373 / NCTC 2599 / NRRL B-3711).